The chain runs to 977 residues: Serine/threonine-protein kinase/endoribonuclease IRE1 (977 aa).

The N-terminal stretch at 1 to 20 is a signal peptide; sequence MPARWLLLLLALLLPPPGPG. Topologically, residues 21–445 are lumenal; it reads SFGRTSTVTL…EAPVDSMLKD (425 aa). An N-linked (GlcNAc...) asparagine glycan is attached at asparagine 178. The chain crosses the membrane as a helical span at residues 446–466; it reads MATIILSTFLLVGWVAFIITY. The Cytoplasmic portion of the chain corresponds to 467-977; the sequence is PLSVHQQRQL…PQPPVIPYAL (511 aa). The segment at 498–559 is disordered; that stretch reads FHPHGDLTQD…PSLEQDDEDE (62 aa). The segment covering 513-551 has biased composition (low complexity); that stretch reads SSGPFSESSGTSSPSPSPRASNHSLHPSSSASRAGTSPS. In terms of domain architecture, Protein kinase spans 571-832; sequence FCPKDVLGHG…AKHVLKHPFF (262 aa). ATP contacts are provided by residues 577 to 585, lysine 599, and 643 to 645; these read LGHGAEGTI and ELC. The active-site Proton acceptor; for protein kinase activity is the aspartate 688. ATP contacts are provided by residues 690-693 and aspartate 711; that span reads KPHN. 2 positions are modified to phosphoserine: serine 724 and serine 729. The region spanning 835–963 is the KEN domain; the sequence is LEKQLQFFQD…ERLFQTYYWH (129 aa). Residues 906 to 907 form an interacts with hydroxy-aryl-aldehyde inhibitors region; the sequence is NK.

This sequence belongs to the protein kinase superfamily. Ser/Thr protein kinase family. Monomer. Homodimer; disulfide-linked; homodimerization takes place in response to endoplasmic reticulum stress and promotes activation of the kinase and endoribonuclease activities. Dimer formation is driven by hydrophobic interactions within the N-terminal luminal domains and stabilized by disulfide bridges. Interacts (via the luminal region) with DNAJB9/ERdj4; interaction takes place in unstressed cells and promotes recruitment of HSPA5/BiP. Interacts (via the luminal region) with HSPA5/BiP; HSPA5/BiP is a negative regulator of the unfolded protein response (UPR) that prevents homodimerization of ERN1/IRE1 and subsequent activation of the protein. Interaction with HSPA5 also competitively inhibits ERN1 interaction with MANF. Interacts with PDIA6, a negative regulator of the UPR; the interaction is direct and disrupts homodimerization. Interacts with DAB2IP (via PH domain); the interaction occurs in a endoplasmic reticulum stress-induced dependent manner and is required for subsequent recruitment of TRAF2 to ERN1/IRE1. Interacts with TAOK3 and TRAF2. Interacts with RNF13. Interacts with LACC1. Interacts (when unphosphorylated) with DDRGK1; interaction is dependent on UFM1 and takes place in response to endoplasmic reticulum stress, regulating ERN1/IRE1-alpha stability. Interacts (via N-terminus) with P4HB/PDIA1; the interaction is enhanced by phosphorylation of P4HB by FAM20C in response to endoplasmic reticulum stress and results in attenuation of ERN1 activity. Interacts with TMBIM6; this interaction inhibits ERN1 activity. Interacts (via luminal domain) with MANF (via C-terminus); the interaction is decreased in the presence of increasing concentrations of Ca(2+). Mg(2+) is required as a cofactor. Autophosphorylated following homodimerization. Autophosphorylation promotes activation of the endoribonuclease domain. In response to ER stress, phosphorylated at Ser-724, Ser-729 and possibly Ser-726; phosphorylation promotes oligomerization and endoribonuclease activity. Dephosphorylated at Ser-724, Ser-729 and possibly Ser-726 by RPAP2 to abort failed ER-stress adaptation and trigger apoptosis. Phosphorylated at Ser-724; in response to the ER stressor tunicamycin. In terms of processing, ADP-ribosylated by PARP16 upon ER stress, which increases both kinase and endonuclease activities. As to expression, expressed in liver (at protein level). Ubiquitously expressed. High levels in thymus, liver and lung. In the brain, preferentially expressed in cortical, hippocampal and olfactory neurons.

The protein localises to the endoplasmic reticulum membrane. The catalysed reaction is L-seryl-[protein] + ATP = O-phospho-L-seryl-[protein] + ADP + H(+). The enzyme catalyses L-threonyl-[protein] + ATP = O-phospho-L-threonyl-[protein] + ADP + H(+). The kinase domain is activated by trans-autophosphorylation following homodimerization. Kinase activity is required for activation of the endoribonuclease domain. Endoribonuclease activity is specifically inhibited by hydroxy-aryl-aldehydes (HAA) MKC9989, OICR464 and OICR573. Its function is as follows. Serine/threonine-protein kinase and endoribonuclease that acts as a key sensor for the endoplasmic reticulum unfolded protein response (UPR). In unstressed cells, the endoplasmic reticulum luminal domain is maintained in its inactive monomeric state by binding to the endoplasmic reticulum chaperone HSPA5/BiP. Accumulation of misfolded protein in the endoplasmic reticulum causes release of HSPA5/BiP, allowing the luminal domain to homodimerize, promoting autophosphorylation of the kinase domain and subsequent activation of the endoribonuclease activity. The endoribonuclease activity is specific for XBP1 mRNA and excises 26 nucleotides from XBP1 mRNA. The resulting spliced transcript of XBP1 encodes a transcriptional activator protein that up-regulates expression of UPR target genes. Acts as an upstream signal for ER stress-induced GORASP2-mediated unconventional (ER/Golgi-independent) trafficking of CFTR to cell membrane by modulating the expression and localization of SEC16A. The protein is Serine/threonine-protein kinase/endoribonuclease IRE1 of Mus musculus (Mouse).